The chain runs to 149 residues: Nucleoside diphosphate kinase (149 aa).

6 residues coordinate ATP: K9, F57, R85, T91, R102, and N112. Catalysis depends on H115, which acts as the Pros-phosphohistidine intermediate.

Belongs to the NDK family. Homotetramer. Mg(2+) is required as a cofactor.

Its subcellular location is the cytoplasm. The enzyme catalyses a 2'-deoxyribonucleoside 5'-diphosphate + ATP = a 2'-deoxyribonucleoside 5'-triphosphate + ADP. It catalyses the reaction a ribonucleoside 5'-diphosphate + ATP = a ribonucleoside 5'-triphosphate + ADP. Its function is as follows. Major role in the synthesis of nucleoside triphosphates other than ATP. The ATP gamma phosphate is transferred to the NDP beta phosphate via a ping-pong mechanism, using a phosphorylated active-site intermediate. This is Nucleoside diphosphate kinase from Cyanothece sp. (strain PCC 7425 / ATCC 29141).